The following is a 500-amino-acid chain: Putative (R)-citramalate synthase CimA (500 aa).

Residues 9 to 258 (LRFFDTTLRD…DTRIRTERLY (250 aa)) form the Pyruvate carboxyltransferase domain.

The protein belongs to the alpha-IPM synthase/homocitrate synthase family. In terms of assembly, homodimer.

The enzyme catalyses pyruvate + acetyl-CoA + H2O = (3R)-citramalate + CoA + H(+). Its pathway is amino-acid biosynthesis; L-isoleucine biosynthesis; 2-oxobutanoate from pyruvate: step 1/3. Catalyzes the condensation of pyruvate and acetyl-coenzyme A to form (R)-citramalate. The polypeptide is Putative (R)-citramalate synthase CimA (Methanosphaerula palustris (strain ATCC BAA-1556 / DSM 19958 / E1-9c)).